The chain runs to 305 residues: UDP-3-O-acyl-N-acetylglucosamine deacetylase (305 aa).

Zn(2+) is bound by residues H78, H237, and D241. H264 acts as the Proton donor in catalysis.

Belongs to the LpxC family. The cofactor is Zn(2+).

It catalyses the reaction a UDP-3-O-[(3R)-3-hydroxyacyl]-N-acetyl-alpha-D-glucosamine + H2O = a UDP-3-O-[(3R)-3-hydroxyacyl]-alpha-D-glucosamine + acetate. The protein operates within glycolipid biosynthesis; lipid IV(A) biosynthesis; lipid IV(A) from (3R)-3-hydroxytetradecanoyl-[acyl-carrier-protein] and UDP-N-acetyl-alpha-D-glucosamine: step 2/6. In terms of biological role, catalyzes the hydrolysis of UDP-3-O-myristoyl-N-acetylglucosamine to form UDP-3-O-myristoylglucosamine and acetate, the committed step in lipid A biosynthesis. In Burkholderia mallei (strain NCTC 10247), this protein is UDP-3-O-acyl-N-acetylglucosamine deacetylase.